Here is a 346-residue protein sequence, read N- to C-terminus: N-acetyl-gamma-glutamyl-phosphate reductase (346 aa).

C150 is a catalytic residue.

Belongs to the NAGSA dehydrogenase family. Type 1 subfamily.

The protein localises to the cytoplasm. It carries out the reaction N-acetyl-L-glutamate 5-semialdehyde + phosphate + NADP(+) = N-acetyl-L-glutamyl 5-phosphate + NADPH + H(+). The protein operates within amino-acid biosynthesis; L-arginine biosynthesis; N(2)-acetyl-L-ornithine from L-glutamate: step 3/4. Catalyzes the NADPH-dependent reduction of N-acetyl-5-glutamyl phosphate to yield N-acetyl-L-glutamate 5-semialdehyde. The chain is N-acetyl-gamma-glutamyl-phosphate reductase from Moorella thermoacetica (strain ATCC 39073 / JCM 9320).